The chain runs to 404 residues: MSGAEEAGGGGPAAGPAGSVPAGVGVGVGAGPGAAAGQAAAAALGEAAGPGLPDEAGLAGARQLQLQEAAGDPDAPPKKRLRAAEAAEAAAAAAAAGSGKLEERLYSVLCCTVCLDLPKASVYQCTNGHLMCAGCFIHLLADARLKEEQATCPNCRCEISKSLCCRNLAVEKAVSELPSECGFCLRQFPRSLLERHQKEECQDRVTQCKYKRIGCPWHGPFHELTVHEAACAHPTKTGSELMEILDGMDQSHRKEMQLYNSIFSLLSFEKIGYTEVQFRPYRTDDFITRLYYETPRFTVLNQTWVLKARVNDSERNPNLSCKRTLSFQLLLKSKVTAPLECSFLLLKGPYDDVRISPVIYHFVFTNESNETDYVPLPIIDSVECNKLLAAKNINLRLFLFQIQK.

A compositionally biased stretch (gly residues) spans 1 to 13 (MSGAEEAGGGGPA). Positions 1–22 (MSGAEEAGGGGPAAGPAGSVPA) are disordered. The RING-type; degenerate zinc-finger motif lies at 111–156 (CTVCLDLPKASVYQCTNGHLMCAGCFIHLLADARLKEEQATCPNCR). The segment at 152 to 225 (CPNCRCEISK…PWHGPFHELT (74 aa)) adopts a TRAF-type zinc-finger fold.

Belongs to the ZFTRAF1 family. As to quaternary structure, interacts with LGALS3.

Its subcellular location is the cytoplasm. The protein resides in the perinuclear region. The polypeptide is Zinc finger TRAF-type-containing protein 1 (Homo sapiens (Human)).